The chain runs to 447 residues: Chromosomal replication initiator protein DnaA (447 aa).

The interval 1 to 66 is domain I, interacts with DnaA modulators; the sequence is MSNRIISILK…SKAIKEAYGK (66 aa). The tract at residues 66–102 is domain II; that stretch reads KNLDYEIVYETTEPEAFNKSNESYKGPLVKKKPLLIS. The tract at residues 103 to 319 is domain III, AAA+ region; the sequence is NLNANYTFEN…GVIIKLIVQS (217 aa). 4 residues coordinate ATP: Gly146, Gly148, Lys149, and Thr150. The domain IV, binds dsDNA stretch occupies residues 320–447; the sequence is SINKERIGAA…NTMATSSAAG (128 aa).

Belongs to the DnaA family. Oligomerizes as a right-handed, spiral filament on DNA at oriC.

It localises to the cytoplasm. Functionally, plays an essential role in the initiation and regulation of chromosomal replication. ATP-DnaA binds to the origin of replication (oriC) to initiate formation of the DNA replication initiation complex once per cell cycle. Binds the DnaA box (a 9 base pair repeat at the origin) and separates the double-stranded (ds)DNA. Forms a right-handed helical filament on oriC DNA; dsDNA binds to the exterior of the filament while single-stranded (ss)DNA is stabiized in the filament's interior. The ATP-DnaA-oriC complex binds and stabilizes one strand of the AT-rich DNA unwinding element (DUE), permitting loading of DNA polymerase. After initiation quickly degrades to an ADP-DnaA complex that is not apt for DNA replication. Binds acidic phospholipids. This is Chromosomal replication initiator protein DnaA from Kosmotoga olearia (strain ATCC BAA-1733 / DSM 21960 / TBF 19.5.1).